We begin with the raw amino-acid sequence, 328 residues long: MCTREAVRMSREHDLPEIPSRRLLLKGAAAAGALTAVPGVAHAAPRPAPYENPLVRQRADPHIHRHTDGRYYFTATAPEYDRIVLRRSRTLGGLSTAAESVIWRAHPTGDMAAHIWAPELHRIGGKWYVYFAAAPAEDVWRIRIWVLENSHPDPFKGTWEEKGQVRTAWETFSLDATTFTHRGARYLCWAQHEPGADNNTGLFLSEMANPWTLTGPQIRLSTPEYDWECVGYKVNEGPYALKRNGRIFLTYSASATDHHYCVGMFTADAGGNLMDPGNWSKSPIPVFTGNETTKQYGPGHNCFTVAEDGRSDVLVYHARQYKEIVGDP.

A signal peptide (tat-tyPE signal) is located at residues 1 to 43 (MCTREAVRMSREHDLPEIPSRRLLLKGAAAAGALTAVPGVAHA). Asp60 serves as the catalytic Proton acceptor. The active-site Proton donor is Glu236.

This sequence belongs to the glycosyl hydrolase 43 family. In terms of processing, predicted to be exported by the Tat system. The position of the signal peptide cleavage has been experimentally proven.

Its subcellular location is the secreted. The catalysed reaction is Hydrolysis of terminal non-reducing alpha-L-arabinofuranoside residues in alpha-L-arabinosides.. The protein operates within glycan metabolism; L-arabinan degradation. Functionally, involved in the degradation of arabinan and is a key enzyme in the complete degradation of the plant cell wall. Catalyzes only the cleavage of terminal alpha-(1-&gt;5) arabinofuranosyl bonds of arabinan present in the arabinofuranosyl polysaccharides or oligosaccharides. It cannot act on other arabinose-containing polysaccharides and arabinoxylo-oligosaccharides. This Streptomyces chartreusis protein is Extracellular exo-alpha-(1-&gt;5)-L-arabinofuranosidase.